The sequence spans 343 residues: Anthranilate phosphoribosyltransferase (343 aa).

5-phospho-alpha-D-ribose 1-diphosphate contacts are provided by residues G83, G86–D87, T91, N93–T96, K111–S119, and S123. G83 provides a ligand contact to anthranilate. S95 contributes to the Mg(2+) binding site. An anthranilate-binding site is contributed by R169. Residues D228 and E229 each contribute to the Mg(2+) site.

This sequence belongs to the anthranilate phosphoribosyltransferase family. As to quaternary structure, homodimer. Mg(2+) serves as cofactor.

The catalysed reaction is N-(5-phospho-beta-D-ribosyl)anthranilate + diphosphate = 5-phospho-alpha-D-ribose 1-diphosphate + anthranilate. It functions in the pathway amino-acid biosynthesis; L-tryptophan biosynthesis; L-tryptophan from chorismate: step 2/5. Catalyzes the transfer of the phosphoribosyl group of 5-phosphorylribose-1-pyrophosphate (PRPP) to anthranilate to yield N-(5'-phosphoribosyl)-anthranilate (PRA). The protein is Anthranilate phosphoribosyltransferase of Thiobacillus denitrificans (strain ATCC 25259 / T1).